The sequence spans 594 residues: Aspartate--tRNA(Asp/Asn) ligase (594 aa).

Glu175 serves as a coordination point for L-aspartate. The aspartate stretch occupies residues 199 to 202; the sequence is QQFK. Residues Arg221 and His455 each contribute to the L-aspartate site. 221-223 contributes to the ATP binding site; it reads RDE. Glu489 is a binding site for ATP. Arg496 is a binding site for L-aspartate. ATP is bound at residue 541–544; it reads GIDR.

Belongs to the class-II aminoacyl-tRNA synthetase family. Type 1 subfamily. Homodimer.

The protein localises to the cytoplasm. The catalysed reaction is tRNA(Asx) + L-aspartate + ATP = L-aspartyl-tRNA(Asx) + AMP + diphosphate. In terms of biological role, aspartyl-tRNA synthetase with relaxed tRNA specificity since it is able to aspartylate not only its cognate tRNA(Asp) but also tRNA(Asn). Reaction proceeds in two steps: L-aspartate is first activated by ATP to form Asp-AMP and then transferred to the acceptor end of tRNA(Asp/Asn). The chain is Aspartate--tRNA(Asp/Asn) ligase from Pelagibacter ubique (strain HTCC1062).